We begin with the raw amino-acid sequence, 283 residues long: Pantothenate synthetase (283 aa).

Methionine 30–histidine 37 contacts ATP. Histidine 37 functions as the Proton donor in the catalytic mechanism. Glutamine 61 contributes to the (R)-pantoate binding site. Beta-alanine is bound at residue glutamine 61. Glycine 149–aspartate 152 contacts ATP. Residue glutamine 155 coordinates (R)-pantoate. Residues leucine 178 and arginine 186–arginine 189 each bind ATP.

Belongs to the pantothenate synthetase family. As to quaternary structure, homodimer.

The protein localises to the cytoplasm. The enzyme catalyses (R)-pantoate + beta-alanine + ATP = (R)-pantothenate + AMP + diphosphate + H(+). The protein operates within cofactor biosynthesis; (R)-pantothenate biosynthesis; (R)-pantothenate from (R)-pantoate and beta-alanine: step 1/1. In terms of biological role, catalyzes the condensation of pantoate with beta-alanine in an ATP-dependent reaction via a pantoyl-adenylate intermediate. The protein is Pantothenate synthetase of Christiangramia forsetii (strain DSM 17595 / CGMCC 1.15422 / KT0803) (Gramella forsetii).